The following is a 319-amino-acid chain: Lipoyl synthase (319 aa).

Residues 1 to 29 (MVVVVDTVSDKPIRPRHPEKAARPDALSP) are disordered. Residues 8-29 (VSDKPIRPRHPEKAARPDALSP) show a composition bias toward basic and acidic residues. Residues C61, C66, C72, C87, C91, C94, and S300 each coordinate [4Fe-4S] cluster. Residues 73–289 (WDRKHATFMI…ESLAYAKGFL (217 aa)) form the Radical SAM core domain.

This sequence belongs to the radical SAM superfamily. Lipoyl synthase family. The cofactor is [4Fe-4S] cluster.

Its subcellular location is the cytoplasm. It catalyses the reaction [[Fe-S] cluster scaffold protein carrying a second [4Fe-4S](2+) cluster] + N(6)-octanoyl-L-lysyl-[protein] + 2 oxidized [2Fe-2S]-[ferredoxin] + 2 S-adenosyl-L-methionine + 4 H(+) = [[Fe-S] cluster scaffold protein] + N(6)-[(R)-dihydrolipoyl]-L-lysyl-[protein] + 4 Fe(3+) + 2 hydrogen sulfide + 2 5'-deoxyadenosine + 2 L-methionine + 2 reduced [2Fe-2S]-[ferredoxin]. It participates in protein modification; protein lipoylation via endogenous pathway; protein N(6)-(lipoyl)lysine from octanoyl-[acyl-carrier-protein]: step 2/2. In terms of biological role, catalyzes the radical-mediated insertion of two sulfur atoms into the C-6 and C-8 positions of the octanoyl moiety bound to the lipoyl domains of lipoate-dependent enzymes, thereby converting the octanoylated domains into lipoylated derivatives. This chain is Lipoyl synthase, found in Rhodopseudomonas palustris (strain BisA53).